Here is a 276-residue protein sequence, read N- to C-terminus: MSSLASPGRIARVFAALHARREVAFIPFITAGDPDLETTAEALLTLDRNGADLLELGLPYSDPLADGPTIQAAATRALARGTTPGAVLDLVARLTPELRAPLIVFTYFNLILAVGIEAFVERLAASGASGLLVPDLPVEEGDALQTAANVQGLDVIWLVAPTSPPERLRRIAERTTGFVYLVSTTGVTGARTQVASSVRTSLAQLRALTTRPVAVGFGISTPEQAHEVASLGADGVIVGSACVQLLATAAPEERLGQLAEFCRQLKKASQTLPVKS.

Catalysis depends on proton acceptor residues glutamate 55 and aspartate 66.

The protein belongs to the TrpA family. As to quaternary structure, tetramer of two alpha and two beta chains.

The catalysed reaction is (1S,2R)-1-C-(indol-3-yl)glycerol 3-phosphate + L-serine = D-glyceraldehyde 3-phosphate + L-tryptophan + H2O. The protein operates within amino-acid biosynthesis; L-tryptophan biosynthesis; L-tryptophan from chorismate: step 5/5. In terms of biological role, the alpha subunit is responsible for the aldol cleavage of indoleglycerol phosphate to indole and glyceraldehyde 3-phosphate. This Gloeobacter violaceus (strain ATCC 29082 / PCC 7421) protein is Tryptophan synthase alpha chain.